The primary structure comprises 250 residues: Ribosomal RNA small subunit methyltransferase J (250 aa).

S-adenosyl-L-methionine is bound by residues 101-102 (RD), 117-118 (ER), 153-154 (SS), and D171.

Belongs to the methyltransferase superfamily. RsmJ family.

It is found in the cytoplasm. The catalysed reaction is guanosine(1516) in 16S rRNA + S-adenosyl-L-methionine = N(2)-methylguanosine(1516) in 16S rRNA + S-adenosyl-L-homocysteine + H(+). Functionally, specifically methylates the guanosine in position 1516 of 16S rRNA. This is Ribosomal RNA small subunit methyltransferase J from Cronobacter sakazakii (strain ATCC BAA-894) (Enterobacter sakazakii).